Consider the following 626-residue polypeptide: Chaperone protein HtpG (626 aa).

Positions 1 to 341 (METKQFKAES…SEDLSLNISR (341 aa)) are a; substrate-binding. A b region spans residues 342 to 552 (EILQHDRQLK…EGELSIEMEK (211 aa)). The interval 490–509 (DLGIEGEEKENTSSSDDKEN) is disordered. Residues 498 to 509 (KENTSSSDDKEN) show a composition bias toward basic and acidic residues. The interval 553–626 (VLNAMPNNQN…FTNNICKIMK (74 aa)) is c.

This sequence belongs to the heat shock protein 90 family. As to quaternary structure, homodimer.

The protein localises to the cytoplasm. Molecular chaperone. Has ATPase activity. In Clostridium botulinum (strain Okra / Type B1), this protein is Chaperone protein HtpG.